Reading from the N-terminus, the 634-residue chain is Probable sulfate transporter 3.5 (634 aa).

A compositionally biased stretch (polar residues) spans 1-12; that stretch reads MENTITSSTSSP. Residues 1-25 form a disordered region; the sequence is MENTITSSTSSPKGRGVNFSTPRGF. Residues 1-81 lie on the Cytoplasmic side of the membrane; that stretch reads MENTITSSTS…KYDMQKLKYD (81 aa). Residues 82–102 form a helical membrane-spanning segment; it reads VLAGITITSLAVPQGISYAKL. The Extracellular segment spans residues 103-104; it reads AS. The helical transmembrane segment at 105 to 125 threads the bilayer; the sequence is IPPIIGLYSSFVPPFVYAVFG. Over 126–130 the chain is Cytoplasmic; it reads SSNNL. Residues 131–151 form a helical membrane-spanning segment; it reads AVGTVAACSLLIAETFGEEMI. Topologically, residues 152–158 are extracellular; that stretch reads KNEPELY. The chain crosses the membrane as a helical span at residues 159-179; it reads LHLIFTATLITGLFQFAMGFL. The Cytoplasmic segment spans residues 180-195; that stretch reads RLGILVDFLSHSTITG. The chain crosses the membrane as a helical span at residues 196-216; the sequence is FMGGTAIIILLQQLKGIFGLV. The Extracellular portion of the chain corresponds to 217–239; the sequence is HFTHKTDVVSVLHSILDNRAEWK. Residues 240–260 traverse the membrane as a helical segment; the sequence is WQSTLAGVCFLVFLQSTRYIK. The Cytoplasmic segment spans residues 261 to 265; that stretch reads QRYPK. Residues 266-286 traverse the membrane as a helical segment; it reads LFWVSAMGPMVVVVVGCVVAY. At 287–321 the chain is on the extracellular side; it reads LVKGTAHGIATVGPLKKGLNPPSIQLLNFDSKYLG. A helical membrane pass occupies residues 322 to 342; it reads MVFKAGIVTGLIALAEGIAIG. Residues 343–358 lie on the Cytoplasmic side of the membrane; it reads RSFAVMKNEQTDGNKE. Residues 359–379 form a helical membrane-spanning segment; the sequence is MIAFGLMNVIGSFTSCYLTTG. Topologically, residues 380-395 are extracellular; sequence PFSKTAVNYNAGTKTP. Residues 396–416 form a helical membrane-spanning segment; the sequence is MSNVVMGVCMMLVLLFLAPLF. Over 417–420 the chain is Cytoplasmic; it reads SYTP. A helical transmembrane segment spans residues 421 to 441; that stretch reads LVGLSAIIMSAMLGLINYEEM. The Extracellular segment spans residues 442-458; that stretch reads YHLFKVDKFDFLVCMSA. Residues 459–479 form a helical membrane-spanning segment; it reads FFGVSFLSMDYGLIISVGFSI. The Cytoplasmic portion of the chain corresponds to 480–634; the sequence is VRALLYVARP…FNLTTTKPEV (155 aa). The STAS domain maps to 508–623; the sequence is QYPASEEMLG…LSIDDAVQAC (116 aa).

This sequence belongs to the SLC26A/SulP transporter (TC 2.A.53) family.

Its subcellular location is the membrane. Its function is as follows. H(+)/sulfate cotransporter that may play a role in the regulation of sulfate assimilation. This chain is Probable sulfate transporter 3.5 (SULTR3;5), found in Arabidopsis thaliana (Mouse-ear cress).